Consider the following 230-residue polypeptide: Enolase-phosphatase E1 (230 aa).

The protein belongs to the HAD-like hydrolase superfamily. MasA/MtnC family. As to quaternary structure, monomer. Mg(2+) serves as cofactor.

The enzyme catalyses 5-methylsulfanyl-2,3-dioxopentyl phosphate + H2O = 1,2-dihydroxy-5-(methylsulfanyl)pent-1-en-3-one + phosphate. Its pathway is amino-acid biosynthesis; L-methionine biosynthesis via salvage pathway; L-methionine from S-methyl-5-thio-alpha-D-ribose 1-phosphate: step 3/6. It participates in amino-acid biosynthesis; L-methionine biosynthesis via salvage pathway; L-methionine from S-methyl-5-thio-alpha-D-ribose 1-phosphate: step 4/6. Its function is as follows. Bifunctional enzyme that catalyzes the enolization of 2,3-diketo-5-methylthiopentyl-1-phosphate (DK-MTP-1-P) into the intermediate 2-hydroxy-3-keto-5-methylthiopentenyl-1-phosphate (HK-MTPenyl-1-P), which is then dephosphorylated to form the acireductone 1,2-dihydroxy-3-keto-5-methylthiopentene (DHK-MTPene). The sequence is that of Enolase-phosphatase E1 from Sulfurihydrogenibium sp. (strain YO3AOP1).